Reading from the N-terminus, the 1043-residue chain is Glutamate receptor ionotropic, NMDA 3B (1043 aa).

The N-terminal stretch at 1–22 (MEFVRALWLGLALALGPGSAGG) is a signal peptide. The Extracellular segment spans residues 23–574 (HPQPCGVLAR…PIGAFMWPLH (552 aa)). N69, N344, N451, and N465 each carry an N-linked (GlcNAc...) asparagine glycan. 2 disulfide bridges follow: C439-C475 and C445-C476. Glycine-binding residues include S531, S533, and R538. Residues S533 and R538 each coordinate D-serine. A helical membrane pass occupies residues 575 to 594 (WSTWLGVFAALHLTALFLTV). Residues 595–615 (YEWRSPYGLTPRGRNRSTVFS) lie on the Cytoplasmic side of the membrane. The segment at residues 616–627 (YSSALNLCYAIL) is an intramembrane region (discontinuously helical). Residues 628–641 (FRRTVSSKTPKCPT) are Cytoplasmic-facing. Residues 642–661 (GRLLMNLWAIFCLLVLSSYT) traverse the membrane as a helical segment. Over 662–832 (ANLAAVMVGD…TLQMSIYHFA (171 aa)) the chain is Extracellular. Position 701 (S701) interacts with glycine. Positions 701, 702, and 745 each coordinate D-serine. D745 is a glycine binding site. A glycan (N-linked (GlcNAc...) asparagine) is linked at N786. The helical transmembrane segment at 833 to 848 (GLFVLLCLGLGSALLS) threads the bilayer. Over 849 to 1043 (SLGEHAFFRL…PHSGRPGSQE (195 aa)) the chain is Cytoplasmic. Disordered stretches follow at residues 882–924 (ALNT…WKRA) and 1012–1043 (GDSARHRPRRLLQARAAPAEAPPHSGRPGSQE). The interval 979 to 1012 (QPGELQELERRIEVARERLRQALVRRGQLLAQLG) is involved in the trafficking and surface expression of NMDARs. A compositionally biased stretch (low complexity) spans 1024–1035 (QARAAPAEAPPH).

It belongs to the glutamate-gated ion channel (TC 1.A.10.1) family. NR3B/GRIN3B subfamily. Forms heterotetrameric channels that contain at least two GluN1 subunits and at least a combination of one GluN2 and one GluN3 subunits (in vitro). Forms heterotetrameric channels composed of two GluN1/zeta subunits (GRIN1), and two identical GluN3 subunits (GRIN3A or GRIN3B) (in vitro). Does not form functional homomeric channels.

Its subcellular location is the cell membrane. It is found in the postsynaptic cell membrane. The catalysed reaction is Ca(2+)(in) = Ca(2+)(out). It catalyses the reaction Na(+)(in) = Na(+)(out). Its function is as follows. Component of a non-conventional N-methyl-D-aspartate (NMDA) receptors (NMDARs) that function as heterotetrameric, ligand-gated cation channels with low calcium permeability and low voltage-dependent block by Mg(2+). Forms glutamatergic receptor complexes with GluN1 and GluN2 subunits which are activated by glycine binding to the GluN1 and GluN3 subunits and L-glutamate binding to GluN2 subunits. Forms excitatory glycinergic receptor complexes with GluN1 alone which are activated by glycine binding to the GluN1 and GluN3 subunits. GluN3B subunit also binds D-serine and, in the absence of glycine, activates glycinergic receptor complexes, but with lower efficacy than glycine. Each GluN3 subunit confers differential attributes to channel properties, including activation, deactivation and desensitization kinetics, pH sensitivity, Ca2(+) permeability, and binding to allosteric modulators. The sequence is that of Glutamate receptor ionotropic, NMDA 3B from Homo sapiens (Human).